A 314-amino-acid chain; its full sequence is Leucine-rich repeat-containing protein 52 (314 aa).

The first 23 residues, 1–23 (MSLASGPSSKLLLFSLGMGLVSG), serve as a signal peptide directing secretion. The LRRNT domain maps to 24–53 (SKCPNKCVCQDQEVACIDLHLTEYPADIPL). Over 24–244 (SKCPNKCVCQ…MCITHLDQQD (221 aa)) the chain is Extracellular. 2 cysteine pairs are disulfide-bonded: cysteine 26–cysteine 32 and cysteine 30–cysteine 39. LRR repeat units follow at residues 54-73 (NTRRLYLNNNKITSLPALQL), 78-99 (DLVYLDCQNNRIREVMDYTFIG), 102-123 (RLIYLDLSSNNLTSISPFSFSV), 126-148 (NLVRLNISHNPHLLYLDKYVFAN), and 151-172 (SLRYLDLRNTGLHIIDHNGFHH). Asparagine 112, asparagine 131, and asparagine 148 each carry an N-linked (GlcNAc...) asparagine glycan. The 55-residue stretch at 184–238 (NPWICNCSFLDFTIHLLVSHMDHPDAQNATCTEPAELKGWPITKVGNPLQYMCIT) folds into the LRRCT domain. 2 disulfide bridges follow: cysteine 188–cysteine 214 and cysteine 190–cysteine 236. N-linked (GlcNAc...) asparagine glycosylation is found at asparagine 189 and asparagine 211. The chain crosses the membrane as a helical span at residues 245 to 265 (YIFLLLIGFCIFAAGTVAAWL). Topologically, residues 266-314 (TGVCAVLYQNALRTSSGDDTEDETGSRFANQIFRSNTHLGPIRRFPELI) are cytoplasmic.

Interacts with KCNMA1. Interacts with KCNU1; this interaction may be required for LRRC52 stability and changes the channel gating properties. Post-translationally, N-glycosylated. As to expression, testis-specific (at protein level). At the mRNA level, also detected in kidney, ventricle, spinal cord and skeletal muscle, although at lower levels compared to testis. Expression in testis at the protein level requires the presence of KCNU1.

The protein resides in the cell membrane. In terms of biological role, auxiliary protein of the large-conductance, voltage and calcium-activated potassium channel (BK alpha). Modulates gating properties by producing a marked shift in the BK channel's voltage dependence of activation in the hyperpolarizing direction, and in the absence of calcium. KCNU1 channel auxiliary protein. Modulates KCNU1 gating properties, shifting KCNU1 gating to more negative potentials at a given pH. This chain is Leucine-rich repeat-containing protein 52 (Lrrc52), found in Mus musculus (Mouse).